Reading from the N-terminus, the 417-residue chain is NADH-quinone oxidoreductase subunit D (417 aa).

Belongs to the complex I 49 kDa subunit family. As to quaternary structure, NDH-1 is composed of 14 different subunits. Subunits NuoB, C, D, E, F, and G constitute the peripheral sector of the complex.

It is found in the cell inner membrane. It carries out the reaction a quinone + NADH + 5 H(+)(in) = a quinol + NAD(+) + 4 H(+)(out). Its function is as follows. NDH-1 shuttles electrons from NADH, via FMN and iron-sulfur (Fe-S) centers, to quinones in the respiratory chain. The immediate electron acceptor for the enzyme in this species is believed to be ubiquinone. Couples the redox reaction to proton translocation (for every two electrons transferred, four hydrogen ions are translocated across the cytoplasmic membrane), and thus conserves the redox energy in a proton gradient. This Albidiferax ferrireducens (strain ATCC BAA-621 / DSM 15236 / T118) (Rhodoferax ferrireducens) protein is NADH-quinone oxidoreductase subunit D.